The sequence spans 251 residues: Triosephosphate isomerase (251 aa).

Residue 9–11 coordinates substrate; the sequence is NWK. His95 (electrophile) is an active-site residue. Glu167 acts as the Proton acceptor in catalysis. Substrate is bound by residues Gly173, Ser213, and 234 to 235; that span reads GG.

Belongs to the triosephosphate isomerase family. Homodimer.

The protein resides in the cytoplasm. It catalyses the reaction D-glyceraldehyde 3-phosphate = dihydroxyacetone phosphate. The protein operates within carbohydrate biosynthesis; gluconeogenesis. It participates in carbohydrate degradation; glycolysis; D-glyceraldehyde 3-phosphate from glycerone phosphate: step 1/1. Functionally, involved in the gluconeogenesis. Catalyzes stereospecifically the conversion of dihydroxyacetone phosphate (DHAP) to D-glyceraldehyde-3-phosphate (G3P). In Carboxydothermus hydrogenoformans (strain ATCC BAA-161 / DSM 6008 / Z-2901), this protein is Triosephosphate isomerase.